An 865-amino-acid polypeptide reads, in one-letter code: AP-1 complex subunit gamma-1 (865 aa).

The tract at residues 665-690 (AEPLETPVDEMTQSPQSSLSRAPSTS) is disordered. A compositionally biased stretch (polar residues) spans 675 to 690 (MTQSPQSSLSRAPSTS). Residues 746–860 (KSYPPIVVFD…LDQVDFGKLP (115 aa)) form the GAE domain.

It belongs to the adaptor complexes large subunit family. As to quaternary structure, adaptor protein complex 1 (AP-1) is a heterotetramer composed of two large adaptins (gamma-type subunit apl4 and beta-type subunit apl2), a medium adaptin (mu-type subunit apm1) and a small adaptin (sigma-type subunit aps1). AP-1 interacts with clathrin.

It localises to the cytoplasmic vesicle. The protein localises to the clathrin-coated vesicle membrane. Its subcellular location is the golgi apparatus. Its function is as follows. Adaptins are components of the adaptor complexes which link clathrin to receptors in coated vesicles. Clathrin-associated protein complexes are believed to interact with the cytoplasmic tails of membrane proteins, leading to their selection and concentration. The AP-1 complex interacts directly with clathrin. This is AP-1 complex subunit gamma-1 (apl4) from Schizosaccharomyces pombe (strain 972 / ATCC 24843) (Fission yeast).